Here is a 241-residue protein sequence, read N- to C-terminus: Small ribosomal subunit protein eS4 (241 aa).

Positions 43–105 constitute an S4 RNA-binding domain; it reads IPLVMVLRDI…INKTFRVLQD (63 aa).

Belongs to the eukaryotic ribosomal protein eS4 family.

This is Small ribosomal subunit protein eS4 from Methanosphaera stadtmanae (strain ATCC 43021 / DSM 3091 / JCM 11832 / MCB-3).